We begin with the raw amino-acid sequence, 293 residues long: Bifunctional protein FolD (293 aa).

Residues Gly164–Ser166, Ser193, and Thr234 contribute to the NADP(+) site.

It belongs to the tetrahydrofolate dehydrogenase/cyclohydrolase family. In terms of assembly, homodimer.

It carries out the reaction (6R)-5,10-methylene-5,6,7,8-tetrahydrofolate + NADP(+) = (6R)-5,10-methenyltetrahydrofolate + NADPH. The enzyme catalyses (6R)-5,10-methenyltetrahydrofolate + H2O = (6R)-10-formyltetrahydrofolate + H(+). The protein operates within one-carbon metabolism; tetrahydrofolate interconversion. In terms of biological role, catalyzes the oxidation of 5,10-methylenetetrahydrofolate to 5,10-methenyltetrahydrofolate and then the hydrolysis of 5,10-methenyltetrahydrofolate to 10-formyltetrahydrofolate. This Azobacteroides pseudotrichonymphae genomovar. CFP2 protein is Bifunctional protein FolD.